A 458-amino-acid chain; its full sequence is RuvB-like helicase 1 (458 aa).

71-78 (GGPGTGKT) contacts ATP.

This sequence belongs to the RuvB family. May form heterododecamers with hel-2/rvb2. Component of the SWR1 chromatin remodeling complex, the INO80 chromatin remodeling complex, and of the R2TP complex.

The protein localises to the nucleus. The catalysed reaction is ATP + H2O = ADP + phosphate + H(+). In terms of biological role, DNA helicase which participates in several chromatin remodeling complexes, including the SWR1 and the INO80 complexes. The SWR1 complex mediates the ATP-dependent exchange of histone H2A for the H2A variant H2A.Z leading to transcriptional regulation of selected genes by chromatin remodeling. The INO80 complex remodels chromatin by shifting nucleosomes and is involved in DNA repair. Also involved in pre-rRNA processing. In Neurospora crassa (strain ATCC 24698 / 74-OR23-1A / CBS 708.71 / DSM 1257 / FGSC 987), this protein is RuvB-like helicase 1 (hel-1).